A 109-amino-acid polypeptide reads, in one-letter code: Putative double-stranded DNA mimic protein YciU (109 aa).

Belongs to the putative dsDNA mimic protein family.

Its function is as follows. May act as a double-stranded DNA (dsDNA) mimic. Probably regulates the activity of a dsDNA-binding protein. The sequence is that of Putative double-stranded DNA mimic protein YciU from Salmonella paratyphi B (strain ATCC BAA-1250 / SPB7).